Consider the following 210-residue polypeptide: Ribosomal RNA small subunit methyltransferase G (210 aa).

Residues Leu-78, 124–125 (IE), and Arg-138 contribute to the S-adenosyl-L-methionine site.

It belongs to the methyltransferase superfamily. RNA methyltransferase RsmG family.

The protein localises to the cytoplasm. The enzyme catalyses guanosine(527) in 16S rRNA + S-adenosyl-L-methionine = N(7)-methylguanosine(527) in 16S rRNA + S-adenosyl-L-homocysteine. Specifically methylates the N7 position of guanine in position 527 of 16S rRNA. This Bordetella bronchiseptica (strain ATCC BAA-588 / NCTC 13252 / RB50) (Alcaligenes bronchisepticus) protein is Ribosomal RNA small subunit methyltransferase G.